The primary structure comprises 236 residues: Proteasome subunit alpha (236 aa).

The protein belongs to the peptidase T1A family. As to quaternary structure, the 20S proteasome core is composed of 14 alpha and 14 beta subunits that assemble into four stacked heptameric rings, resulting in a barrel-shaped structure. The two inner rings, each composed of seven catalytic beta subunits, are sandwiched by two outer rings, each composed of seven alpha subunits. The catalytic chamber with the active sites is on the inside of the barrel. Has a gated structure, the ends of the cylinder being occluded by the N-termini of the alpha-subunits. Is capped by the proteasome-associated ATPase, ARC.

Its subcellular location is the cytoplasm. The protein operates within protein degradation; proteasomal Pup-dependent pathway. With respect to regulation, the formation of the proteasomal ATPase ARC-20S proteasome complex, likely via the docking of the C-termini of ARC into the intersubunit pockets in the alpha-rings, may trigger opening of the gate for substrate entry. Interconversion between the open-gate and close-gate conformations leads to a dynamic regulation of the 20S proteasome proteolysis activity. Its function is as follows. Component of the proteasome core, a large protease complex with broad specificity involved in protein degradation. This chain is Proteasome subunit alpha, found in Pseudarthrobacter chlorophenolicus (strain ATCC 700700 / DSM 12829 / CIP 107037 / JCM 12360 / KCTC 9906 / NCIMB 13794 / A6) (Arthrobacter chlorophenolicus).